Consider the following 662-residue polypeptide: ATP-dependent zinc metalloprotease FtsH (662 aa).

Over residues 1–15 the composition is skewed to basic and acidic residues; that stretch reads MSENPVKRPGKDGSR. The segment at 1 to 35 is disordered; that stretch reads MSENPVKRPGKDGSRNKFKPVQEEGGTPGWFRSKG. Topologically, residues 1–39 are cytoplasmic; sequence MSENPVKRPGKDGSRNKFKPVQEEGGTPGWFRSKGESPQ. The helical transmembrane segment at 40–60 threads the bilayer; it reads GKFPGFLLFLMAGLLMLFVFL. Residues 61 to 154 are Periplasmic-facing; the sequence is RFFSGTDAPE…LKVEKGSSDL (94 aa). The chain crosses the membrane as a helical span at residues 155–175; the sequence is NTFLALFAPWIIFAALYFFLF. The Cytoplasmic portion of the chain corresponds to 176–662; the sequence is RRMSGQNGAQ…QGALPNPVTA (487 aa). 250-257 is a binding site for ATP; the sequence is GPPGTGKT. His472 is a binding site for Zn(2+). Residue Glu473 is part of the active site. Residues His476 and Asp548 each contribute to the Zn(2+) site.

In the central section; belongs to the AAA ATPase family. This sequence in the C-terminal section; belongs to the peptidase M41 family. Homohexamer. The cofactor is Zn(2+).

It localises to the cell inner membrane. Its function is as follows. Acts as a processive, ATP-dependent zinc metallopeptidase for both cytoplasmic and membrane proteins. Plays a role in the quality control of integral membrane proteins. This is ATP-dependent zinc metalloprotease FtsH from Pelodictyon phaeoclathratiforme (strain DSM 5477 / BU-1).